The following is a 187-amino-acid chain: Thermosensitive gluconokinase (187 aa).

10–17 is a binding site for ATP; it reads GVSGSGKT.

It belongs to the gluconokinase GntK/GntV family.

The enzyme catalyses D-gluconate + ATP = 6-phospho-D-gluconate + ADP + H(+). Its pathway is carbohydrate acid metabolism; L-idonate degradation. This Escherichia coli (strain K12) protein is Thermosensitive gluconokinase (idnK).